A 193-amino-acid polypeptide reads, in one-letter code: tRNA (cytidine(56)-2'-O)-methyltransferase (193 aa).

Residues Leu86 and 115–119 (GGEKV) contribute to the S-adenosyl-L-methionine site.

This sequence belongs to the aTrm56 family. As to quaternary structure, homodimer.

It is found in the cytoplasm. It carries out the reaction cytidine(56) in tRNA + S-adenosyl-L-methionine = 2'-O-methylcytidine(56) in tRNA + S-adenosyl-L-homocysteine + H(+). Its function is as follows. Specifically catalyzes the AdoMet-dependent 2'-O-ribose methylation of cytidine at position 56 in tRNAs. This chain is tRNA (cytidine(56)-2'-O)-methyltransferase, found in Haloquadratum walsbyi (strain DSM 16790 / HBSQ001).